Reading from the N-terminus, the 1073-residue chain is Probable nuclear hormone receptor HR38 (1073 aa).

Disordered regions lie at residues 55–87, 150–185, 263–326, 437–458, 492–514, 529–579, and 618–640; these read NLNA…LPPP, TPAP…SNCD, TQTA…LVSP, ALHA…QQHQ, KYNS…APTP, PPLS…NSGG, and GQQQ…NGER. Low complexity-rich tracts occupy residues 59–82, 175–185, and 263–277; these read PTHQ…QQHP, DSNSDSNSNCD, and TQTA…ASAA. Residues 279 to 291 are compositionally biased toward basic residues; sequence HHQHHNHLLHQQH. Composition is skewed to low complexity over residues 292-326, 441-458, and 495-514; these read HNQQ…LVSP, QQQQ…QQHQ, and SSSG…APTP. The span at 619 to 636 shows a compositional bias: low complexity; it reads QQQQQQQQSYQQHNYNSH. Positions 741–816 form a DNA-binding region, nuclear receptor; sequence SQLCAVCGDT…VGMVKEVVRT (76 aa). NR C4-type zinc fingers lie at residues 744-764 and 780-804; these read CAVC…CEGC and CLAD…FQKC. The disordered stretch occupies residues 819 to 841; the sequence is LKGRRGRLPSKPKSPQESPPSPP. Positions 840–1070 constitute an NR LBD domain; the sequence is PPISLITALV…ALIENMFVTT (231 aa).

It belongs to the nuclear hormone receptor family. NR4 subfamily. As to quaternary structure, forms a heterodimer with USP. Ubiquitously expressed in preblastoderm embryos, specifically in central nervous system and intestinal tract. Highly expressed in third instar larval imaginal disks and brain complexes, but not in ovaries.

The protein localises to the nucleus. Functionally, binds to NGFI-B response elements. Plays an important role in late stages of epidermal metamorphosis. The polypeptide is Probable nuclear hormone receptor HR38 (Hr38) (Drosophila melanogaster (Fruit fly)).